Reading from the N-terminus, the 378-residue chain is Coiled-coil domain-containing protein 74A (378 aa).

Disordered regions lie at residues 1-52 (MSGA…RNLD), 128-211 (GGPS…EEPL), and 301-328 (EGSQ…PKVS). Residues 34 to 44 (LRPQSPQLRQS) show a composition bias toward polar residues. A coiled-coil region spans residues 47–90 (QKRNLDLEKSLQFLQQQHSEMLAKLHEEIEHLKRENKDLHYKLI). Basic residues predominate over residues 141–151 (RTHRPGGKRGR). The segment covering 165-182 (DSLSMSSFQSVKSISNSG) has biased composition (polar residues). Basic and acidic residues-rich tracts occupy residues 194–205 (QDSKADVSQKAD) and 314–323 (SFPRDQEATH).

The polypeptide is Coiled-coil domain-containing protein 74A (CCDC74A) (Homo sapiens (Human)).